The chain runs to 484 residues: MKLNDIIQGLDIINVKGELNIDINNVQYDSRKVTKGTLFICIKGFVSDGHKYIKDAIEKGASAFIVEEDVAIKGCTFIKVKDTRKDMAKVADNFYNHPSQKFNVIGVTGTNGKTSITTILNEILTLNKNKVGLIGTIKIFDGEKDIVSNSTTPESIDLQYHFNNMLDNGCDYCAMEVSSHSLALNRVDETDFKLGIFTNLTPDHLDFHKDLEDYRKAKEKLFFKTTMANIINIDDEGGKKIYENIKGINVPCYTYGVDTKADFMARDIKSDSDGVSYRLITPSYEEVIFIPVPGMFTVYNTLAVIAACYVLGIPKPIYKEGLRLSNGVSGRFETVPNDKGISVIVDYAHTPDALENVLKTTQQFAEGKIISVFGCGGDRDTEKRPLMGAIGQKYSDLCIITSDNPRTEEPEAIIKDILEGIDKKKENYHVVVDREQAIAEAISMAKKDDVVIITGKGHETYQIIGKVKHHFDDKEVANECLSKM.

Residue Ser30 coordinates UDP-N-acetyl-alpha-D-muramoyl-L-alanyl-D-glutamate. 109–115 (GTNGKTS) provides a ligand contact to ATP. UDP-N-acetyl-alpha-D-muramoyl-L-alanyl-D-glutamate is bound by residues 151-152 (TT), Ser178, and Arg186. Lys218 carries the N6-carboxylysine modification. Residues Arg379, 403-406 (DNPR), Gly455, and Glu459 contribute to the meso-2,6-diaminopimelate site. The Meso-diaminopimelate recognition motif motif lies at 403 to 406 (DNPR).

Belongs to the MurCDEF family. MurE subfamily. Mg(2+) is required as a cofactor. In terms of processing, carboxylation is probably crucial for Mg(2+) binding and, consequently, for the gamma-phosphate positioning of ATP.

Its subcellular location is the cytoplasm. It catalyses the reaction UDP-N-acetyl-alpha-D-muramoyl-L-alanyl-D-glutamate + meso-2,6-diaminopimelate + ATP = UDP-N-acetyl-alpha-D-muramoyl-L-alanyl-gamma-D-glutamyl-meso-2,6-diaminopimelate + ADP + phosphate + H(+). The protein operates within cell wall biogenesis; peptidoglycan biosynthesis. In terms of biological role, catalyzes the addition of meso-diaminopimelic acid to the nucleotide precursor UDP-N-acetylmuramoyl-L-alanyl-D-glutamate (UMAG) in the biosynthesis of bacterial cell-wall peptidoglycan. The chain is UDP-N-acetylmuramoyl-L-alanyl-D-glutamate--2,6-diaminopimelate ligase from Clostridioides difficile (strain 630) (Peptoclostridium difficile).